Reading from the N-terminus, the 452-residue chain is Pup--protein ligase (452 aa).

Glutamate 9 is a binding site for Mg(2+). An ATP-binding site is contributed by arginine 53. Tyrosine 55 contacts Mg(2+). Aspartate 57 functions as the Proton acceptor in the catalytic mechanism. A Mg(2+)-binding site is contributed by glutamate 63. ATP contacts are provided by threonine 66 and tryptophan 419.

The protein belongs to the Pup ligase/Pup deamidase family. Pup-conjugating enzyme subfamily.

The catalysed reaction is ATP + [prokaryotic ubiquitin-like protein]-L-glutamate + [protein]-L-lysine = ADP + phosphate + N(6)-([prokaryotic ubiquitin-like protein]-gamma-L-glutamyl)-[protein]-L-lysine.. The protein operates within protein degradation; proteasomal Pup-dependent pathway. Its pathway is protein modification; protein pupylation. Catalyzes the covalent attachment of the prokaryotic ubiquitin-like protein modifier Pup to the proteasomal substrate proteins, thereby targeting them for proteasomal degradation. This tagging system is termed pupylation. The ligation reaction involves the side-chain carboxylate of the C-terminal glutamate of Pup and the side-chain amino group of a substrate lysine. The chain is Pup--protein ligase from Mycolicibacterium gilvum (strain PYR-GCK) (Mycobacterium gilvum (strain PYR-GCK)).